We begin with the raw amino-acid sequence, 349 residues long: NADH-quinone oxidoreductase subunit H (349 aa).

8 helical membrane passes run 14–34 (LLVWTLLKIIAIVLPMLGCVA), 85–105 (GLFLLAPVLSIGPALAAWAVI), 120–140 (LLYILALTSMGVYGVIIAGWA), 164–184 (MGFALVGVLMVSGSLNLVDIV), 196–216 (ILSWNWIPLFPLFIVYLISGV), 243–263 (GMAFAIFFLAEYANMILVAAL), 285–305 (AGGFFWLAVKMALVLFCFLWF), and 324–344 (VFIPVTLVWILVVGAWMFSPL).

It belongs to the complex I subunit 1 family. As to quaternary structure, NDH-1 is composed of 14 different subunits. Subunits NuoA, H, J, K, L, M, N constitute the membrane sector of the complex.

It localises to the cell inner membrane. The catalysed reaction is a quinone + NADH + 5 H(+)(in) = a quinol + NAD(+) + 4 H(+)(out). Functionally, NDH-1 shuttles electrons from NADH, via FMN and iron-sulfur (Fe-S) centers, to quinones in the respiratory chain. The immediate electron acceptor for the enzyme in this species is believed to be ubiquinone. Couples the redox reaction to proton translocation (for every two electrons transferred, four hydrogen ions are translocated across the cytoplasmic membrane), and thus conserves the redox energy in a proton gradient. This subunit may bind ubiquinone. The sequence is that of NADH-quinone oxidoreductase subunit H from Chromobacterium violaceum (strain ATCC 12472 / DSM 30191 / JCM 1249 / CCUG 213 / NBRC 12614 / NCIMB 9131 / NCTC 9757 / MK).